A 257-amino-acid chain; its full sequence is DNA repair protein RecO (257 aa).

Belongs to the RecO family.

Functionally, involved in DNA repair and RecF pathway recombination. The polypeptide is DNA repair protein RecO (Streptococcus thermophilus (strain CNRZ 1066)).